The sequence spans 207 residues: Nucleoplasmin-2 (207 aa).

Polar residues predominate over residues 1–15 (MSRHSTSSVTETTAK). Disordered stretches follow at residues 1 to 20 (MSRHSTSSVTETTAKNMLWG) and 121 to 207 (DLTW…VTKK). The segment covering 123–147 (TWEDDEEEEEEEEEEDEDEDADISL) has biased composition (acidic residues). An acidic tract A2 region spans residues 129–152 (EEEEEEEEEDEDEDADISLEEIPV). A Bipartite nuclear localization signal motif is present at residues 165–180 (SIAKKKKVEKEEDETV). Over residues 198 to 207 (PRAKKPVTKK) the composition is skewed to basic residues.

This sequence belongs to the nucleoplasmin family. In terms of assembly, homopentamer, when bound to H2A-H2B dimers only. Homodecamer of two stacked pentamers, when bound to H2A-H2B dimers and H3-H4 tetramers simultaneously. Ovary specific.

It localises to the nucleus. Core histones chaperone involved in chromatin reprogramming, specially during fertilization and early embryonic development. Probably involved in sperm DNA decondensation during fertilization. This chain is Nucleoplasmin-2 (Npm2), found in Mus musculus (Mouse).